A 357-amino-acid chain; its full sequence is Probable cinnamyl alcohol dehydrogenase (357 aa).

Cysteine 47 contributes to the Zn(2+) binding site. Threonine 49 is a binding site for NADP(+). Zn(2+) contacts are provided by histidine 69, glutamate 70, cysteine 100, cysteine 103, cysteine 106, cysteine 114, and cysteine 163. NADP(+) is bound by residues threonine 167, 188–193 (GLGGVG), 211–216 (SSSDKK), threonine 251, glycine 275, and 298–300 (SFI).

Belongs to the zinc-containing alcohol dehydrogenase family. As to quaternary structure, homodimer. The cofactor is Zn(2+).

The enzyme catalyses (E)-cinnamyl alcohol + NADP(+) = (E)-cinnamaldehyde + NADPH + H(+). It catalyses the reaction (E)-coniferol + NADP(+) = (E)-coniferaldehyde + NADPH + H(+). The catalysed reaction is (E)-sinapyl alcohol + NADP(+) = (E)-sinapaldehyde + NADPH + H(+). It carries out the reaction (E)-4-coumaroyl alcohol + NADP(+) = (E)-4-coumaraldehyde + NADPH + H(+). The enzyme catalyses (E)-caffeyl alcohol + NADP(+) = (E)-caffeyl aldehyde + NADPH + H(+). The protein operates within aromatic compound metabolism; phenylpropanoid biosynthesis. Involved in lignin biosynthesis. Catalyzes the final step specific for the production of lignin monomers. Catalyzes the NADPH-dependent reduction of coniferaldehyde, 5-hydroxyconiferaldehyde, sinapaldehyde, 4-coumaraldehyde and caffeyl aldehyde to their respective alcohols. This Populus deltoides (Eastern poplar) protein is Probable cinnamyl alcohol dehydrogenase.